The following is a 484-amino-acid chain: Endoglucanase 9 (484 aa).

Positions methionine 1 to alanine 21 are cleaved as a signal peptide. The active-site Nucleophile is aspartate 77. Catalysis depends on residues histidine 402, aspartate 453, and glutamate 462.

Belongs to the glycosyl hydrolase 9 (cellulase E) family. As to expression, specifically expressed in root cap cells.

It is found in the secreted. The protein localises to the cell wall. The catalysed reaction is Endohydrolysis of (1-&gt;4)-beta-D-glucosidic linkages in cellulose, lichenin and cereal beta-D-glucans.. The polypeptide is Endoglucanase 9 (CEL3) (Arabidopsis thaliana (Mouse-ear cress)).